An 892-amino-acid polypeptide reads, in one-letter code: Alanine--tRNA ligase (892 aa).

4 residues coordinate Zn(2+): His596, His600, Cys700, and His704.

The protein belongs to the class-II aminoacyl-tRNA synthetase family. The cofactor is Zn(2+).

It is found in the cytoplasm. It carries out the reaction tRNA(Ala) + L-alanine + ATP = L-alanyl-tRNA(Ala) + AMP + diphosphate. In terms of biological role, catalyzes the attachment of alanine to tRNA(Ala) in a two-step reaction: alanine is first activated by ATP to form Ala-AMP and then transferred to the acceptor end of tRNA(Ala). Also edits incorrectly charged Ser-tRNA(Ala) and Gly-tRNA(Ala) via its editing domain. The chain is Alanine--tRNA ligase from Methanococcus maripaludis (strain C5 / ATCC BAA-1333).